The primary structure comprises 244 residues: Ribonuclease HII (244 aa).

In terms of domain architecture, RNase H type-2 spans 31 to 222 (RLIAGVDEAG…VRLALQGREG (192 aa)). Residues aspartate 37, glutamate 38, and aspartate 130 each contribute to the a divalent metal cation site.

The protein belongs to the RNase HII family. Mn(2+) serves as cofactor. It depends on Mg(2+) as a cofactor.

Its subcellular location is the cytoplasm. It catalyses the reaction Endonucleolytic cleavage to 5'-phosphomonoester.. In terms of biological role, endonuclease that specifically degrades the RNA of RNA-DNA hybrids. In Xanthomonas axonopodis pv. citri (strain 306), this protein is Ribonuclease HII.